The sequence spans 476 residues: Sulfate adenylyltransferase subunit 1 (476 aa).

One can recognise a tr-type G domain in the interval 24-238; sequence KSLLRFLTCG…ELLEYVDIDR (215 aa). A G1 region spans residues 33–40; sequence GSVDDGKS. 33–40 contributes to the GTP binding site; the sequence is GSVDDGKS. The G2 stretch occupies residues 91–95; the sequence is GITID. Residues 112 to 115 are G3; that stretch reads DTPG. GTP-binding positions include 112–116 and 167–170; these read DTPGH and NKMD. Residues 167-170 form a G4 region; that stretch reads NKMD. A G5 region spans residues 205 to 207; sequence SAL.

The protein belongs to the TRAFAC class translation factor GTPase superfamily. Classic translation factor GTPase family. CysN/NodQ subfamily. Heterodimer composed of CysD, the smaller subunit, and CysN.

It carries out the reaction sulfate + ATP + H(+) = adenosine 5'-phosphosulfate + diphosphate. The protein operates within sulfur metabolism; hydrogen sulfide biosynthesis; sulfite from sulfate: step 1/3. Functionally, with CysD forms the ATP sulfurylase (ATPS) that catalyzes the adenylation of sulfate producing adenosine 5'-phosphosulfate (APS) and diphosphate, the first enzymatic step in sulfur assimilation pathway. APS synthesis involves the formation of a high-energy phosphoric-sulfuric acid anhydride bond driven by GTP hydrolysis by CysN coupled to ATP hydrolysis by CysD. The polypeptide is Sulfate adenylyltransferase subunit 1 (Vibrio cholerae serotype O1 (strain M66-2)).